We begin with the raw amino-acid sequence, 160 residues long: Ribosomal RNA large subunit methyltransferase H (160 aa).

S-adenosyl-L-methionine contacts are provided by leucine 76 and glycine 108.

Belongs to the RNA methyltransferase RlmH family. In terms of assembly, homodimer.

The protein resides in the cytoplasm. The catalysed reaction is pseudouridine(1915) in 23S rRNA + S-adenosyl-L-methionine = N(3)-methylpseudouridine(1915) in 23S rRNA + S-adenosyl-L-homocysteine + H(+). Functionally, specifically methylates the pseudouridine at position 1915 (m3Psi1915) in 23S rRNA. The polypeptide is Ribosomal RNA large subunit methyltransferase H (Afipia carboxidovorans (strain ATCC 49405 / DSM 1227 / KCTC 32145 / OM5) (Oligotropha carboxidovorans)).